The following is a 632-amino-acid chain: MNQYQAESYDVIVVGAGHAGSEAALAAARMGVKTLLLTINLDMVAFMPCNPSVGGPAKGVVVREIDALGGEMGKNIDKTYIQMRMLNTGKGPAVRALRAQADKHAYATEMKHTIEKEENLTLRQGIVEELIVEDGVCRGVVTSTGAAYRSQAVVITAGTALRGEIIIGELKYSSGPNNSQPSVGLANHLKELGLEIDRFKTGTPPRVKSSTIDYSVTEEQPGDKEPNHFSYSTPDSAYNQNQEPCWLTYTNETTHEIIQKNLHRAPMFTGIVEGVGARYCPSIEDKIVRFADKPRHQLFLEPEGLNTEEVYVQGLSTSLPEDVQTEMLHSIEGLEKVEMMRTGYAIEYDVVVPHQLRPTLETKVIENLYTAGQTNGTSGYEEAAGQGLMAGINAALKIQGKEPLVLKRSDGYIGVMIDDLVTKGTNEPYRLLTSRAEYRLILRHDNADLRLTEMGHEIGLVKEEQYAAYLVKKAAVEAEIARLGKHRIKPTKEVQAFLETKGAAGLKDGILARDFLKRPEISYQEVAQFIPAPEEALDPKVIEQVEIQIKYEGYIKKAMEKVEKLKRMEAKRIPENIDYQAINGLATEAKQKLQKIQPETIAQASRISGVNPADISILMVYIEQGKIAKVQG.

Residues 15–20, Val-127, and Ser-182 each bind FAD; that span reads GAGHAG. 276-290 is an NAD(+) binding site; the sequence is GARYCPSIEDKIVRF. Residue Gln-373 coordinates FAD.

This sequence belongs to the MnmG family. In terms of assembly, homodimer. Heterotetramer of two MnmE and two MnmG subunits. FAD is required as a cofactor.

It localises to the cytoplasm. In terms of biological role, NAD-binding protein involved in the addition of a carboxymethylaminomethyl (cmnm) group at the wobble position (U34) of certain tRNAs, forming tRNA-cmnm(5)s(2)U34. This is tRNA uridine 5-carboxymethylaminomethyl modification enzyme MnmG from Enterococcus faecalis (strain ATCC 700802 / V583).